Reading from the N-terminus, the 528-residue chain is MSQTSLKKERDPSILILDFGSQYSELIARRIRETNVFSLVVSNCISIEEINDINPKGIILSGGPNSVYEKNAPKCDEKIFNLGIPILGICYGMQLMVKELGGSVTSATKKAEYGRAPINIDQESELLSDVEDKSIMWMSHGDSINCLPDGFNKIAHTENTLHAAISNDRKKLFGVQFHPEVIHSEFGITVIKNFVYGISSCVADWTTETYIEETIPRIRDQVGNKKVLLALSGGVDSSTLAFLLNKAIGNQLTCMFIDQGFMRKGEPEFLMNFFDKKFHIKVEYINARERFISKLKGITDPEQKRKIIGEEFIRVFEEESNRLGPFQYLAQGTLYPDVIESAGTNIDPKTGERIAVKIKSHHNVGGLPKDLQFKLVEPLRKLFKDEVRKLGAALGLPDEIIKRHPFPGPGLAIRILGEVNNEKLDCLRDADWIVRDEIKKAGLYNDIWQAFAVLLPVKTVGVMGDKRTYAWPIVLRCVSSEDGMTADWSKIPFPILERISNRIVNEVVSVNRVVYDITSKPPGTIEWE.

The Glutamine amidotransferase type-1 domain maps to 13-204; the sequence is SILILDFGSQ…VYGISSCVAD (192 aa). The Nucleophile role is filled by C90. Active-site residues include H178 and E180. Positions 205–403 constitute a GMPS ATP-PPase domain; it reads WTTETYIEET…LGLPDEIIKR (199 aa). Residue 232–238 coordinates ATP; that stretch reads SGGVDSS.

As to quaternary structure, homodimer.

It catalyses the reaction XMP + L-glutamine + ATP + H2O = GMP + L-glutamate + AMP + diphosphate + 2 H(+). Its pathway is purine metabolism; GMP biosynthesis; GMP from XMP (L-Gln route): step 1/1. Functionally, catalyzes the synthesis of GMP from XMP. The chain is GMP synthase [glutamine-hydrolyzing] from Prochlorococcus marinus (strain MIT 9312).